Consider the following 116-residue polypeptide: MSTSAVTEPVDIVARLQIAGSAEEFFELLGVAYDPKLLNVARLHILRRMGQYLAGEDLEHLPGDEAAARCKAVLERAYADFVASSPLDQRVFKVLKDAVAPKTPKRPAFVPLDALK.

Belongs to the NifW family. As to quaternary structure, homotrimer; associates with NifD.

Its function is as follows. May protect the nitrogenase Fe-Mo protein from oxidative damage. This is Nitrogenase-stabilizing/protective protein NifW from Rhodopseudomonas palustris (strain TIE-1).